A 484-amino-acid chain; its full sequence is MEAMKETVEESLREMRETFASGRTRSLKWRKAQIGAIYEMVKDNEDKICNALFQDLGKHSTEAFRDELGVVLRTATVAINCLDKWAVPKHSKLPLLFYPAKGKVISEPYGTVLVLSSWNFPISLSLDPLIGAIAAGNTVLLKSSELSPNASAFLAKTIPAYLDTKAIKVIEGGPDVATILLQHQWDKIFFTGSPKIGRIIMAAAAQHLTPVTLELGGKCPTIVDHHTISKNIKSVVKRIAGGKWGSCNGQACISVDYVLIEKSFAPTLIDMLKPTIKSFFGENPKESGCLSRIANKHHVQRLSRLLSDPRVQASIVYGGSIDEDKLYVEPTILLDPPLDSEIMNEEIFGPILPIITVRDIQESIGIINTKPKPLAIYAFTNDENLKTRILSETSSGSVTFNDVMIQYMCDALPFGGVGESGIGRYHGKYSFDCFSHEKAIMEGSLGMDLEARYPPWNNFKLTFIRLAFREAYFKLILLMLGLKR.

192-197 (GSPKIG) serves as a coordination point for NAD(+). The Proton acceptor role is filled by E214. Residue C252 is the Nucleophile of the active site.

This sequence belongs to the aldehyde dehydrogenase family. In terms of assembly, homotetramer. Constituively expressed at low levels.

The enzyme catalyses an aldehyde + NAD(+) + H2O = a carboxylate + NADH + 2 H(+). In Arabidopsis thaliana (Mouse-ear cress), this protein is Aldehyde dehydrogenase family 3 member F1 (ALDH3F1).